Consider the following 234-residue polypeptide: MEDKVFNKPIEKQFEFDEEVASVFDDMLNRSVPFYKENLNLQIDILKNFLSDQDKIIDLGSSTGTFLIELAKKKENLDLIGIDNSEAMIKRAKNKARAFGVKVEFINSDFLEYDLSGSKAIVANYTVQFIRPLKREKLIKKIYDSLKNDGIFLMSEKLITENKKLNKIMIDIYYDYKKQMGYSEFEIAQKREALENVLIPYTMQENIEMLKNAGFKEIEVVFRWNNFATFIAFK.

S-adenosyl-L-methionine-binding positions include Tyr-35, 60-62 (GSS), 83-84 (DN), Asn-124, and Arg-191.

This sequence belongs to the class I-like SAM-binding methyltransferase superfamily. Cx-SAM synthase family. Homodimer.

It catalyses the reaction prephenate + S-adenosyl-L-methionine = carboxy-S-adenosyl-L-methionine + 3-phenylpyruvate + H2O. In terms of biological role, catalyzes the conversion of S-adenosyl-L-methionine (SAM) to carboxy-S-adenosyl-L-methionine (Cx-SAM). This Nautilia profundicola (strain ATCC BAA-1463 / DSM 18972 / AmH) protein is Carboxy-S-adenosyl-L-methionine synthase.